The following is a 230-amino-acid chain: 7-cyano-7-deazaguanine synthase (230 aa).

F8–L18 contacts ATP. C187, C196, C199, and C202 together coordinate Zn(2+).

This sequence belongs to the QueC family. Requires Zn(2+) as cofactor.

The enzyme catalyses 7-carboxy-7-deazaguanine + NH4(+) + ATP = 7-cyano-7-deazaguanine + ADP + phosphate + H2O + H(+). It participates in purine metabolism; 7-cyano-7-deazaguanine biosynthesis. Its function is as follows. Catalyzes the ATP-dependent conversion of 7-carboxy-7-deazaguanine (CDG) to 7-cyano-7-deazaguanine (preQ(0)). In Shewanella amazonensis (strain ATCC BAA-1098 / SB2B), this protein is 7-cyano-7-deazaguanine synthase.